Reading from the N-terminus, the 99-residue chain is L-rhamnose mutarotase (99 aa).

Substrate is bound at residue Tyr-18. His-22 acts as the Proton donor in catalysis. Substrate contacts are provided by residues Tyr-41 and 76-77 (WW).

Belongs to the rhamnose mutarotase family. Homodimer.

The protein localises to the cytoplasm. The catalysed reaction is alpha-L-rhamnose = beta-L-rhamnose. It functions in the pathway carbohydrate metabolism; L-rhamnose metabolism. Its function is as follows. Involved in the anomeric conversion of L-rhamnose. The polypeptide is L-rhamnose mutarotase (Shigella boydii serotype 18 (strain CDC 3083-94 / BS512)).